The primary structure comprises 506 residues: Maturase K (506 aa).

It belongs to the intron maturase 2 family. MatK subfamily.

Its subcellular location is the plastid. It localises to the chloroplast. Its function is as follows. Usually encoded in the trnK tRNA gene intron. Probably assists in splicing its own and other chloroplast group II introns. This chain is Maturase K, found in Trifolium spumosum (Mediterranean clover).